Consider the following 209-residue polypeptide: Large ribosomal subunit protein uL3c (209 aa).

Positions 132-154 are disordered; that stretch reads PMSHGSKNHRLPGSIGAGSTPGR.

Belongs to the universal ribosomal protein uL3 family. As to quaternary structure, part of the 50S ribosomal subunit.

It is found in the plastid. It localises to the cyanelle. In terms of biological role, one of the primary rRNA binding proteins, it binds directly near the 3'-end of the 23S rRNA, where it nucleates assembly of the 50S subunit. The protein is Large ribosomal subunit protein uL3c (rpl3) of Cyanophora paradoxa.